Reading from the N-terminus, the 147-residue chain is uncharacterized protein (147 aa).

Positions 29 to 147 are disordered; that stretch reads PYGNNSVHQG…GHHHGHHHKH (119 aa). Polar residues-rich tracts occupy residues 34–45 and 60–73; these read SVHQGQPHTDQN and PQAQYGNAGQNQPS. Residues 75–92 are compositionally biased toward gly residues; sequence PFGGAGYTGPTAGTGFGN. The span at 122–147 shows a compositional bias: basic residues; it reads DGHHKKHGRKEHDHHHGHHHGHHHKH.

This is an uncharacterized protein from Caenorhabditis elegans.